Reading from the N-terminus, the 911-residue chain is Ribonuclease J (911 aa).

A chloroplast-targeting transit peptide spans 1–70 (MMKPASLQGF…VTSAPASGTS (70 aa)). Residues 58-90 (SCSVTSAPASGTSSSSKTPRRRSGRLEGVGKSM) are disordered. Residues 63–74 (SAPASGTSSSSK) show a composition bias toward low complexity. The Zn(2+) site is built by His-175, His-177, Asp-179, His-180, His-245, and Asp-267. Substrate contacts are provided by residues 336-338 (ASN) and 468-472 (HTSGH). His-494 contributes to the Zn(2+) binding site. Disordered regions lie at residues 695–723 (VEGNDKRSRAKKAPSQEASPKEVDRTLED) and 735–824 (EETA…WKPE). Basic and acidic residues-rich tracts occupy residues 713-722 (SPKEVDRTLE) and 783-795 (ADTEPKAEGKENS). Over residues 796–806 (RDDDELADASD) the composition is skewed to acidic residues. Residues 813–877 (PKRVRKNKWK…QCKSLWASLI (65 aa)) form the Myb-like domain.

This sequence belongs to the metallo-beta-lactamase superfamily. RNA-metabolizing metallo-beta-lactamase-like family. Bacterial RNase J subfamily. Homodimer. May be a subunit of the RNA degradosome. Requires Zn(2+) as cofactor. As to expression, moslty expressed in inflorescences, seedlings, leaves, flowers and flower buds, and, to a lower extent, in stems, siliques and roots.

Its subcellular location is the plastid. It is found in the chloroplast. In terms of biological role, essential protein required during embryogenesis, especially in initiating and maintaining the organization of shoot apical meristems (SAMs), cotyledons, and hypocotyls. Involved in auxin-mediated pathways during embryogenesis. RNase that has both endonuclease and 5'-3' exonuclease activities. Involved in RNA surveillance to prevent overaccumulation of antisense RNA. Probably involved in maturation of rRNA and in some organisms also mRNA maturation and/or decay. The sequence is that of Ribonuclease J from Arabidopsis thaliana (Mouse-ear cress).